The sequence spans 131 residues: Type-5 thionin (131 aa).

Positions 1–29 (MGGGQKGLESAIVCLLVLGLVLEQVQVEG) are cleaved as a signal peptide. The propeptide at 67 to 131 (LASVRSSDEP…GDTLLASLDD (65 aa)) is acidic domain.

This sequence belongs to the plant thionin (TC 1.C.44) family. Post-translationally, is disulfide-linked. In terms of tissue distribution, developing endosperm.

The protein localises to the secreted. Thionins are small plant proteins which are toxic to animal cells. They seem to exert their toxic effect at the level of the cell membrane. Their precise function is not known. The sequence is that of Type-5 thionin (TTHV) from Triticum aestivum (Wheat).